Consider the following 344-residue polypeptide: MVKRNLILAFESSCDETSVSVIEDGHRVLSNIVATQIASHQRFGGVVPEVASRHHIEQITKCTKEALEQAGVSYQDLTAVAVTYGPGLVGSLLIGVTAAKTIAWAHQLPLVPVNHMAGHLYAARFVSDFTYPMLGLLVSGGHTELVYMKEEHDYQIIGETRDDAAGEAYDKVGRVMGINYPAGKTVDQWAAKGHDTFHFPRAMEKEDNFDFSFSGLKSAFINTVHNADQRGEVLDKYDLAASFQQSVVDVLVAKTIRALDEFPVKQLILAGGVAANQGLRKQLSAGLQAKHPEVQLLQAPLKYCGDNAAMIGAAGYVNYLHGDRADGSLNAVPGLSFAHLKEEN.

The Fe cation site is built by His115 and His119. Residues 137–141, Asp170, Gly183, Asp187, and Asn276 contribute to the substrate site; that span reads LVSGG. Asp306 is a binding site for Fe cation.

It belongs to the KAE1 / TsaD family. Fe(2+) is required as a cofactor.

The protein resides in the cytoplasm. It carries out the reaction L-threonylcarbamoyladenylate + adenosine(37) in tRNA = N(6)-L-threonylcarbamoyladenosine(37) in tRNA + AMP + H(+). In terms of biological role, required for the formation of a threonylcarbamoyl group on adenosine at position 37 (t(6)A37) in tRNAs that read codons beginning with adenine. Is involved in the transfer of the threonylcarbamoyl moiety of threonylcarbamoyl-AMP (TC-AMP) to the N6 group of A37, together with TsaE and TsaB. TsaD likely plays a direct catalytic role in this reaction. The chain is tRNA N6-adenosine threonylcarbamoyltransferase from Limosilactobacillus fermentum (strain NBRC 3956 / LMG 18251) (Lactobacillus fermentum).